The primary structure comprises 296 residues: Transposase for insertion sequence element IST2 (296 aa).

The protein belongs to the transposase mutator family.

Functionally, required for the transposition of the insertion element. In Acidithiobacillus ferrooxidans (Thiobacillus ferrooxidans), this protein is Transposase for insertion sequence element IST2.